A 205-amino-acid polypeptide reads, in one-letter code: Arginine exporter protein ArgO (205 aa).

A run of 6 helical transmembrane segments spans residues methionine 1–proline 21, leucine 42–leucine 62, leucine 67–alanine 87, isoleucine 111–valine 131, tryptophan 147–alanine 167, and leucine 185–leucine 205.

The protein belongs to the LysE/ArgO transporter (TC 2.A.75) family.

The protein localises to the cell inner membrane. It catalyses the reaction L-arginine(in) = L-arginine(out). Its function is as follows. Involved in the export of arginine. Important to control the intracellular level of arginine and the correct balance between arginine and lysine. In Yersinia pseudotuberculosis serotype IB (strain PB1/+), this protein is Arginine exporter protein ArgO.